The sequence spans 961 residues: Gamma-tubulin small complex component GCP2 (961 aa).

The segment at 15–76 (NLHRSPKLAT…KPSIPPLKSE (62 aa)) is disordered. Over residues 43–54 (LGSNVVSHPTRS) the composition is skewed to polar residues. Residues 55–65 (SPEKTTDKPAD) are compositionally biased toward basic and acidic residues.

Belongs to the TUBGCP family. In terms of assembly, component of the gamma-tubulin small complex (gamma-TuSC) composed of tubulin gamma chain, gamma-tubulin complex protein 2 (GCP2) and gamma-tubulin complex protein 3 (GCP3). Interacts with tubulin gamma chain.

Its subcellular location is the cytoplasm. It is found in the cytoskeleton. The protein resides in the flagellum axoneme. The protein localises to the flagellum basal body. In terms of biological role, component of the gamma-tubulin small complex (gamma-TuSC) involved in microtubule (MT) nucleation for the formation of median bodies and in the biogenesis of flagella. Gamma-TuSC may be required for the correct positioning of EB1 within the trophozoites. This is Gamma-tubulin small complex component GCP2 from Giardia intestinalis (strain ATCC 50803 / WB clone C6) (Giardia lamblia).